The primary structure comprises 282 residues: Protein MGF 505-3R (282 aa).

This sequence belongs to the asfivirus MGF 505 family.

Its function is as follows. Plays a role in virus cell tropism, and may be required for efficient virus replication in macrophages. In Ornithodoros (relapsing fever ticks), this protein is Protein MGF 505-3R.